A 564-amino-acid chain; its full sequence is Cysteine--tRNA ligase CPS1, chloroplastic/mitochondrial (564 aa).

A chloroplast and mitochondrion-targeting transit peptide spans 1–43 (MAAAVVVRRAAGLIPLLSSRFGARMPLHRALSQIPPPRFCRLL). Cys93 contacts Zn(2+). Positions 95 to 105 (VTPYDDSHIGH) match the 'HIGH' region motif. The Zn(2+) site is built by Cys273, His298, and Glu302. A 'KMSKS' region motif is present at residues 330–334 (KMSKS). Position 333 (Lys333) interacts with ATP.

This sequence belongs to the class-I aminoacyl-tRNA synthetase family. It depends on Zn(2+) as a cofactor.

Its subcellular location is the plastid. The protein resides in the chloroplast. It localises to the mitochondrion. It carries out the reaction tRNA(Cys) + L-cysteine + ATP = L-cysteinyl-tRNA(Cys) + AMP + diphosphate. In terms of biological role, nuclear genome-encoded factor required for normal assembly of chloroplast polysomes. This Zea mays (Maize) protein is Cysteine--tRNA ligase CPS1, chloroplastic/mitochondrial.